The primary structure comprises 433 residues: Putative zinc metalloprotease BB_0118 (433 aa).

Residue His17 coordinates Zn(2+). Glu18 is a catalytic residue. His21 is a binding site for Zn(2+). A helical membrane pass occupies residues 98 to 120 (ILIYFAGPLFNLIFSFIVFIFIS). Residues 193 to 265 (TVSLQDFLKE…VVEIKFSRNG (73 aa)) enclose the PDZ domain. The next 3 membrane-spanning stretches (helical) occupy residues 334–356 (VSGP…LYWI), 366–388 (LAGM…FISF), and 401–423 (TIYS…GLFN).

It belongs to the peptidase M50B family. Zn(2+) serves as cofactor.

It localises to the cell inner membrane. This is Putative zinc metalloprotease BB_0118 from Borreliella burgdorferi (strain ATCC 35210 / DSM 4680 / CIP 102532 / B31) (Borrelia burgdorferi).